Consider the following 215-residue polypeptide: C' protein (215 aa).

Residues 12–34 form a disordered region; it reads MPSFLKKILKLRGRRQEDESRSR. Residues 15–22 are involved in self-degradation and in host STAT1 degradation; the sequence is FLKKILKL.

This sequence belongs to the respirovirus protein C family. The different isoforms interact (via C-terminus) with unphosphorylated and phosphorylated human STAT1 (via N-terminus), favoring the formation of parallel STAT1 homodimers. The different isoforms do not interact with host STAT2. C protein interacts with L protein; this interaction has an inhibitory effect on viral transcription and replication. In terms of processing, Y1 and Y2 proteins are produced not only by alternative initiation, but also by proteolytic cleavage of C'. Only alternative initiation is detected in vitro, whereas in vivo cleavage seems to be predominant.

Its subcellular location is the host cytoplasm. It is found in the virion. Functionally, the different isoforms prevent the establishment of cellular antiviral state by blocking the interferon-alpha/beta (IFN-alpha/beta) and IFN-gamma signaling pathways. They inhibit IFN-alpha/beta induced tyrosine phosphorylation of STAT1 and STAT2. Blocking the IFN-alpha/beta pathway requires binding to STAT1 in the cytoplasm. They inhibit IFN-gamma induced serine phosphorylation of STAT1. Block the IFN-gamma pathway by binding to and stabilizing the parallel form of the STAT1 dimer, further inducing high-molecular-weight complex (HMWC) formation and inhibition of transcription by IFN-gamma. May also have a role in preventing the cell to enter apoptosis. Modulate regulation of viral transcription and replication. Overexpression inhibits the viral RNA polymerase. The absence of all C', C, Y1 and Y2 proteins leads to viral delayed growth. Plays an important role in virion particles release. Modulates virion shape. The polypeptide is C' protein (P/V/C) (Sendai virus (strain Z) (SeV)).